Reading from the N-terminus, the 247-residue chain is Exosome complex component Rrp4 (247 aa).

The 74-residue stretch at 75–148 (DDLVIGIVEN…RDPVITVKGK (74 aa)) folds into the S1 motif domain. The KH domain maps to 154–220 (TEGVVVDVKP…QAIKLIELKA (67 aa)).

The protein belongs to the RRP4 family. In terms of assembly, component of the archaeal exosome complex. Forms a trimer of Rrp4 and/or Csl4 subunits. The trimer associates with a hexameric ring-like arrangement composed of 3 Rrp41-Rrp42 heterodimers.

The protein resides in the cytoplasm. Non-catalytic component of the exosome, which is a complex involved in RNA degradation. Increases the RNA binding and the efficiency of RNA degradation. Confers strong poly(A) specificity to the exosome. The sequence is that of Exosome complex component Rrp4 from Thermosphaera aggregans (strain DSM 11486 / M11TL).